Consider the following 145-residue polypeptide: MKVILIKDTKDGKANTIIDVSPGYATNFLFKNKLAEPLNSRTEKLLVKRKQQIEIEKQEKQEQIAKLKIEIERLVLWFKLKGNKESVHGAITAKKIKKELEIKGIFVDKQAIQTSGISTFGTSFVDIKLSSQTIAKLKINITKDE.

Belongs to the bacterial ribosomal protein bL9 family.

Its function is as follows. Binds to the 23S rRNA. The chain is Large ribosomal subunit protein bL9 from Mesomycoplasma hyopneumoniae (strain 232) (Mycoplasma hyopneumoniae).